A 126-amino-acid chain; its full sequence is Glycine cleavage system H protein (126 aa).

Residues 23–104 (TLTVGITDHA…PYDNWLFKIK (82 aa)) enclose the Lipoyl-binding domain. N6-lipoyllysine is present on Lys-64.

The protein belongs to the GcvH family. In terms of assembly, the glycine cleavage system is composed of four proteins: P, T, L and H. Requires (R)-lipoate as cofactor.

Functionally, the glycine cleavage system catalyzes the degradation of glycine. The H protein shuttles the methylamine group of glycine from the P protein to the T protein. The chain is Glycine cleavage system H protein from Paraburkholderia phymatum (strain DSM 17167 / CIP 108236 / LMG 21445 / STM815) (Burkholderia phymatum).